The following is a 502-amino-acid chain: Glutamate decarboxylase 1 (502 aa).

Phosphoserine is present on serine 8. At lysine 277 the chain carries N6-(pyridoxal phosphate)lysine. The tract at residues leucine 469–cysteine 502 is calmodulin-binding.

Belongs to the group II decarboxylase family. Homohexamer. Interacts with calmodulin with a 1:3 stoichiometry. Pyridoxal 5'-phosphate is required as a cofactor. Expressed in roots. Detected at low levels in shoots of young seedlings. Not detected in the root tips or in the central vascular bundle in the elongating region of mature roots.

The enzyme catalyses L-glutamate + H(+) = 4-aminobutanoate + CO2. Its activity is regulated as follows. Up-regulated by calmodulin binding at physiological pH. Its function is as follows. Catalyzes the conversion of glutamate to 4-aminobutanoate (GABA). The calmodulin-binding is calcium-dependent and it is proposed to directly or indirectly form a calcium regulated control of GABA biosynthesis. The chain is Glutamate decarboxylase 1 (GAD1) from Arabidopsis thaliana (Mouse-ear cress).